Reading from the N-terminus, the 295-residue chain is MEKKVGTDRVKRGMAQMQKGGVIMDVVNAEQAKIAEEAGAVAVMALERVPSDIRAAGGVARMADPRIVEEVMNAVSIPVMAKARIGHITEARVLEAMGVDYIDESEVLTPADDEFHLLKSDFTVPFVCGCRDIGEALRRIGEGAAMLRTKGEPGTGNIVEAVRHMRQVNGQIRQIASMTDDELMVAAKNFGAPYELVKEIKTLGKLPVVNFAAGGVATPADAALMMELGADGVFVGSGIFKSDNPAKFASAIVQATTYYTDYELIGKLSKELGSPMKGIEMSRLNPEDRMQDRSF.

Asp-25 is a D-ribose 5-phosphate binding site. The Schiff-base intermediate with D-ribose 5-phosphate role is filled by Lys-82. Gly-154 is a binding site for D-ribose 5-phosphate. A D-glyceraldehyde 3-phosphate-binding site is contributed by Arg-166. D-ribose 5-phosphate is bound by residues Gly-215 and 236–237 (GS).

The protein belongs to the PdxS/SNZ family. In terms of assembly, in the presence of PdxT, forms a dodecamer of heterodimers.

The enzyme catalyses aldehydo-D-ribose 5-phosphate + D-glyceraldehyde 3-phosphate + L-glutamine = pyridoxal 5'-phosphate + L-glutamate + phosphate + 3 H2O + H(+). It participates in cofactor biosynthesis; pyridoxal 5'-phosphate biosynthesis. Functionally, catalyzes the formation of pyridoxal 5'-phosphate from ribose 5-phosphate (RBP), glyceraldehyde 3-phosphate (G3P) and ammonia. The ammonia is provided by the PdxT subunit. Can also use ribulose 5-phosphate and dihydroxyacetone phosphate as substrates, resulting from enzyme-catalyzed isomerization of RBP and G3P, respectively. This is Pyridoxal 5'-phosphate synthase subunit PdxS from Listeria innocua serovar 6a (strain ATCC BAA-680 / CLIP 11262).